The chain runs to 2860 residues: Methylcytosine dioxygenase TET (2860 aa).

2 disordered regions span residues histidine 51 to glutamine 255 and glycine 457 to serine 562. A compositionally biased stretch (basic residues) spans histidine 57–glutamine 70. 2 stretches are compositionally biased toward low complexity: residues glutamine 71–glycine 181 and alanine 191–serine 231. The span at threonine 468 to proline 482 shows a compositional bias: polar residues. Low complexity-rich tracts occupy residues histidine 492 to proline 508 and serine 536 to serine 546. The CXXC-type zinc-finger motif lies at serine 591 to glutamate 631. Zn(2+) is bound by residues cysteine 598, cysteine 601, cysteine 604, cysteine 610, cysteine 613, cysteine 616, cysteine 625, and cysteine 630. 7 disordered regions span residues glycine 641–glutamine 734, glutamine 771–glutamine 810, glutamine 920–alanine 1113, arginine 1130–glycine 1155, leucine 1170–glutamine 1195, alanine 1209–tyrosine 1356, and glycine 1437–histidine 1460. Positions threonine 692–serine 706 are enriched in low complexity. The span at leucine 718–leucine 732 shows a compositional bias: polar residues. Low complexity-rich tracts occupy residues glutamine 771–threonine 804, glutamine 930–glutamine 942, and alanine 985–threonine 1021. A compositionally biased stretch (polar residues) spans proline 1040–leucine 1054. Residues glutamine 1076–glutamine 1085 show a composition bias toward low complexity. Residues histidine 1086–tryptophan 1097 are compositionally biased toward polar residues. The segment covering leucine 1141–glutamine 1153 has biased composition (low complexity). Composition is skewed to low complexity over residues glutamine 1248–glutamine 1263 and serine 1299–alanine 1312. Residues proline 1337–glycine 1349 are compositionally biased toward pro residues. Positions 1638, 1640, 1699, 1725, and 1727 each coordinate Zn(2+). The segment at leucine 1657–arginine 2666 is interaction with wds. Arginine 1767 contacts 2-oxoglutarate. Zn(2+) contacts are provided by cysteine 1777, cysteine 1779, cysteine 1795, cysteine 1804, and cysteine 1862. 2-oxoglutarate is bound at residue cysteine 1878. Residue histidine 1884 participates in Zn(2+) binding. The Fe cation site is built by histidine 1886 and aspartate 1888. Asparagine 1891 provides a ligand contact to substrate. Histidine 1919 is a 2-oxoglutarate binding site. Disordered regions lie at residues proline 1966–serine 2115, leucine 2198–alanine 2229, serine 2263–glutamate 2334, alanine 2350–aspartate 2371, methionine 2422–histidine 2444, and leucine 2536–lysine 2598. Residues glutamate 1979 to alanine 1989 show a composition bias toward acidic residues. Low complexity-rich tracts occupy residues alanine 1993–serine 2015 and glycine 2029–glycine 2059. The segment covering arginine 2069–serine 2086 has biased composition (polar residues). The segment covering proline 2212–alanine 2229 has biased composition (low complexity). The segment covering serine 2263–valine 2275 has biased composition (polar residues). Positions glutamine 2276–glutamine 2285 are enriched in low complexity. Positions glycine 2290–proline 2304 are enriched in gly residues. Positions glutamine 2426–proline 2437 are enriched in pro residues. Over residues serine 2540–aspartate 2562 the composition is skewed to polar residues. Residues alanine 2570–threonine 2594 show a composition bias toward low complexity. Position 2642 (histidine 2642) interacts with Fe cation. A 2-oxoglutarate-binding site is contributed by arginine 2657–threonine 2659. Tyrosine 2663 to histidine 2665 is a binding site for substrate. Histidine 2673 is a Zn(2+) binding site. The tract at residues lysine 2729–threonine 2860 is disordered. The span at serine 2732 to alanine 2742 shows a compositional bias: polar residues. The span at serine 2750–alanine 2768 shows a compositional bias: basic and acidic residues. 2 stretches are compositionally biased toward low complexity: residues proline 2772–threonine 2785 and asparagine 2798–histidine 2821. Positions leucine 2822–threonine 2849 are enriched in pro residues. Over residues proline 2850–threonine 2860 the composition is skewed to low complexity.

This sequence belongs to the TET family. In terms of assembly, interacts (via C-terminus) with wds (via WD repeats). Requires Fe(2+) as cofactor. Zn(2+) serves as cofactor. Expressed in brain (at protein level).

The protein localises to the chromosome. It carries out the reaction an N(6)-methyl-2'-deoxyadenosine in DNA + 2-oxoglutarate + O2 = a 2'-deoxyadenosine in DNA + formaldehyde + succinate + CO2. The enzyme catalyses a 5-methyl-2'-deoxycytidine in DNA + 2-oxoglutarate + O2 = a 5-hydroxymethyl-2'-deoxycytidine in DNA + succinate + CO2. The catalysed reaction is a 5-hydroxymethyl-2'-deoxycytidine in DNA + 2-oxoglutarate + O2 = a 5-formyl-2'-deoxycytidine in DNA + succinate + CO2 + H2O. It catalyses the reaction a 5-formyl-2'-deoxycytidine in DNA + 2-oxoglutarate + O2 = a 5-carboxyl-2'-deoxycytidine in DNA + succinate + CO2 + H(+). In terms of biological role, dioxygenase that specifically demethylates DNA methylated on the 6th position of adenine (N(6)-methyladenosine) DNA. N(6)-methyladenosine (m6A) DNA is present at a relatively high level at the very earliest embryonic stages but at low levels at the late embryonic stages and may act as a regulator of gene expression. Promotes differentiation of early germ cells in ovary. Contributes to neuronal morphology, development, and function in the brain. By interacting with histone modifier wds, binds to a specific set of genes, modulates intragenic (N(6)-methyladenosine) DNA levels and thereby maintains transcriptional activation. Also able to catalyze the conversion of the modified genomic base 5-methylcytosine (5mC) into 5-hydroxymethylcytosine (5hmC). This chain is Methylcytosine dioxygenase TET, found in Drosophila melanogaster (Fruit fly).